Reading from the N-terminus, the 31-residue chain is Cytochrome b6-f complex subunit 6 (31 aa).

The chain crosses the membrane as a helical span at residues 3-23; sequence ILISYFCFLLVFFLFTLILFI.

It belongs to the PetL family. In terms of assembly, the 4 large subunits of the cytochrome b6-f complex are cytochrome b6, subunit IV (17 kDa polypeptide, PetD), cytochrome f and the Rieske protein, while the 4 small subunits are PetG, PetL, PetM and PetN. The complex functions as a dimer.

The protein resides in the plastid. The protein localises to the chloroplast thylakoid membrane. In terms of biological role, component of the cytochrome b6-f complex, which mediates electron transfer between photosystem II (PSII) and photosystem I (PSI), cyclic electron flow around PSI, and state transitions. PetL is important for photoautotrophic growth as well as for electron transfer efficiency and stability of the cytochrome b6-f complex. This chain is Cytochrome b6-f complex subunit 6, found in Welwitschia mirabilis (Tree tumbo).